A 218-amino-acid polypeptide reads, in one-letter code: Large ribosomal subunit protein uL3 (218 aa).

A disordered region spans residues 121–163; the sequence is GYQKRHGFSRGPMTHGSKNHREPGSIGPGTTPGRIYPGKRMAG.

Belongs to the universal ribosomal protein uL3 family. In terms of assembly, part of the 50S ribosomal subunit. Forms a cluster with proteins L14 and L19.

One of the primary rRNA binding proteins, it binds directly near the 3'-end of the 23S rRNA, where it nucleates assembly of the 50S subunit. In Parasynechococcus marenigrum (strain WH8102), this protein is Large ribosomal subunit protein uL3.